The sequence spans 304 residues: MPEREEPWRKTLETFLNYLTLERNFSGNTRASYLNDLGRYLAWLHECGVKPEEAAPGDIRKFIQELHEIGLEASSIARNISAIRSFHKFLLTERLATMNPAENIHQPKLARYLPSVLTIEEMATLLDAPLKRHPTSTFMLRDKAMLEFLYATGVRVSELLGLSRLNLHMDDGFVRVFGKGSKERLVPVGQTAISWMKRYLDELRPGMMSATSHDTIFLNSRGGPLSRMAAWNIVREHAVIAGIEKPISPHTFRHSFATHLLEGGADLRVVQEMLGHSSIIATQIYTHIDRSFIKEVHKTFHPRG.

The region spanning 6-91 is the Core-binding (CB) domain; the sequence is EPWRKTLETF…AIRSFHKFLL (86 aa). Positions 112-298 constitute a Tyr recombinase domain; that stretch reads YLPSVLTIEE…DRSFIKEVHK (187 aa). Residues Arg155, Lys179, His250, Arg253, and His276 contribute to the active site. The active-site O-(3'-phospho-DNA)-tyrosine intermediate is the Tyr285.

The protein belongs to the 'phage' integrase family. XerD subfamily. As to quaternary structure, forms a cyclic heterotetrameric complex composed of two molecules of XerC and two molecules of XerD.

The protein localises to the cytoplasm. In terms of biological role, site-specific tyrosine recombinase, which acts by catalyzing the cutting and rejoining of the recombining DNA molecules. The XerC-XerD complex is essential to convert dimers of the bacterial chromosome into monomers to permit their segregation at cell division. It also contributes to the segregational stability of plasmids. The chain is Tyrosine recombinase XerD from Chlorobaculum tepidum (strain ATCC 49652 / DSM 12025 / NBRC 103806 / TLS) (Chlorobium tepidum).